We begin with the raw amino-acid sequence, 85 residues long: Putative membrane protein insertion efficiency factor (85 aa).

It belongs to the UPF0161 family.

The protein resides in the cell membrane. Could be involved in insertion of integral membrane proteins into the membrane. Its function is as follows. Lyses fish blood cells. The chain is Putative membrane protein insertion efficiency factor (hlyA) from Aeromonas hydrophila.